Here is a 435-residue protein sequence, read N- to C-terminus: Envelope glycoprotein M (435 aa).

The Intravirion portion of the chain corresponds to 1–36 (MGTQKKGPRSEKVSPYDTTTPEVEALDHQMDTLNWR). Residues 37–57 (IWIIQVMMFTLGAVMLLATLI) traverse the membrane as a helical segment. Residues 58-111 (AASSEYTGIPCFYAAVVDYELFNATLDGGVWSGNRGGYSAPVLFLEPHSVVAFT) are Virion surface-facing. A helical membrane pass occupies residues 112–132 (YYTALTAMAMAVYTLITAAII). Residues 133–155 (HRETKNQRVRQSSGVAWLVVDPT) are Intravirion-facing. The helical transmembrane segment at 156–176 (TLFWGLLSLWLLNAVVLLLAY) threads the bilayer. Topologically, residues 177-178 (KQ) are virion surface. Residues 179 to 199 (IGVAATLYLGHFATSVIFTTY) traverse the membrane as a helical segment. The Intravirion segment spans residues 200–233 (FCGRGKLDETNIKAVANLRQQSVFLYRLAGPTRA). Residues 234–254 (VFVNLMAALMAICILFVSLML) form a helical membrane-spanning segment. At 255-265 (ELVVANHLHTG) the chain is on the virion surface side. Residues 266–288 (LWSSVSVAMSTFSTLSVVYLIVS) traverse the membrane as a helical segment. The Intravirion segment spans residues 289-294 (ELILAH). Residues 295 to 317 (YIHVLIGPSLGTLVACATLGTAA) traverse the membrane as a helical segment. Residues 318–334 (HSYMDRLYDPISVQSPR) are Virion surface-facing. The chain crosses the membrane as a helical span at residues 335–355 (LIPTTRGTLACLAVFSVVMLL). The Intravirion portion of the chain corresponds to 356 to 435 (LRLMRAYVYH…LYERSNSGWE (80 aa)).

The protein belongs to the herpesviridae glycoprotein M family. Interacts (via N-terminus) with gN (via N-terminus). The gM-gN heterodimer forms the gCII complex.

The protein localises to the virion membrane. It localises to the host Golgi apparatus. Its subcellular location is the host trans-Golgi network. It is found in the host endosome membrane. The protein resides in the host nucleus inner membrane. Functionally, envelope glycoprotein important for virion assembly and egress. Plays a role in the correct incorporation of gH-gL into virion membrane. Directs the glycoprotein N (gN) to the host trans-Golgi network. The chain is Envelope glycoprotein M from Homo sapiens (Human).